Here is a 263-residue protein sequence, read N- to C-terminus: MTSPIPTPTKFDDKFGSISKSYKNFRPTYNDELYSIIDSHCDEKRDLAIDIGAGSGQATVRLAKYFKKVIGFEPSQGQIENAEKTDNVEYRLSAAEKIDLPSGSVDLITVAQAAHWFNLPVFYEESKRLLRENGSLIIWSYGLMKITNNNDAQVVHEKHYYETIGDQYWAPERKYIDDEYVDIKPSFENTTRKTISLPKSMSINDMIGYYSSWSGYAAFIKAGNKDVLPEIKETLLKAYKTTDGDSKLIDVNFPVYMILSKKE.

Belongs to the methyltransferase superfamily.

In Dictyostelium discoideum (Social amoeba), this protein is Putative methyltransferase DDB_G0268948.